Here is an 89-residue protein sequence, read N- to C-terminus: Small ribosomal subunit protein uS17 (89 aa).

The protein belongs to the universal ribosomal protein uS17 family. Part of the 30S ribosomal subunit.

Functionally, one of the primary rRNA binding proteins, it binds specifically to the 5'-end of 16S ribosomal RNA. The polypeptide is Small ribosomal subunit protein uS17 (Azoarcus sp. (strain BH72)).